The chain runs to 415 residues: Glucose-6-phosphate isomerase (415 aa).

The active-site Proton donor is the E267. Residues H293 and K406 contribute to the active site.

It belongs to the GPI family.

Its subcellular location is the cytoplasm. The enzyme catalyses alpha-D-glucose 6-phosphate = beta-D-fructose 6-phosphate. It functions in the pathway carbohydrate biosynthesis; gluconeogenesis. It participates in carbohydrate degradation; glycolysis; D-glyceraldehyde 3-phosphate and glycerone phosphate from D-glucose: step 2/4. In terms of biological role, catalyzes the reversible isomerization of glucose-6-phosphate to fructose-6-phosphate. This is Glucose-6-phosphate isomerase from Thermus thermophilus (strain ATCC 27634 / DSM 579 / HB8).